A 474-amino-acid chain; its full sequence is Proline--tRNA ligase (474 aa).

Belongs to the class-II aminoacyl-tRNA synthetase family. ProS type 3 subfamily. As to quaternary structure, homodimer.

The protein localises to the cytoplasm. The enzyme catalyses tRNA(Pro) + L-proline + ATP = L-prolyl-tRNA(Pro) + AMP + diphosphate. Functionally, catalyzes the attachment of proline to tRNA(Pro) in a two-step reaction: proline is first activated by ATP to form Pro-AMP and then transferred to the acceptor end of tRNA(Pro). In Mycoplasma mycoides subsp. mycoides SC (strain CCUG 32753 / NCTC 10114 / PG1), this protein is Proline--tRNA ligase.